The following is a 141-amino-acid chain: Hemoglobin subunit beta-C (141 aa).

Residues 1 to 141 (PNKALITGFW…VASALAHRYH (141 aa)) form the Globin domain. Heme b is bound by residues histidine 58 and histidine 87.

Belongs to the globin family. Heterotetramer of two alpha chains and two beta chains. As to expression, red blood cells.

In terms of biological role, involved in oxygen transport from the lung to the various peripheral tissues. The polypeptide is Hemoglobin subunit beta-C (HBBC) (Ovis aries musimon (Mouflon)).